The chain runs to 210 residues: T-cell surface glycoprotein CD8 beta chain (210 aa).

Positions 1-21 (MRPRLWLLLAAQLTVLHGNSV) are cleaved as a signal peptide. One can recognise an Ig-like V-type domain in the interval 22–132 (LQQTPAYIKV…ELTFGKGTQL (111 aa)). At 22–170 (LQQTPAYIKV…ETQKGPLCSP (149 aa)) the chain is on the extracellular side. Cys-41 and Cys-116 are disulfide-bonded. An N-linked (GlcNAc...) asparagine glycan is attached at Asn-102. The chain crosses the membrane as a helical span at residues 171–191 (ITLGLLVAGVLVLLVSLGVAI). The Cytoplasmic portion of the chain corresponds to 192 to 210 (HLCCRRRRARLRFMKQFYK). Tyr-209 bears the Phosphotyrosine mark.

Forms disulfide-linked heterodimers with CD8A at the cell surface. Interacts with CD3D; this interaction couples TCR-CD3 with CD8. Interacts with LCK. Phosphorylated as a consequence of T-cell activation. Post-translationally, palmitoylated at the cytoplasmic tail and thereby targets the heterodimer CD8A/CD8B to lipid rafts unlike CD8A homodimers. In terms of tissue distribution, isoform 1, isoform 3, isoform 5, isoform 6, isoform 7 and isoform 8 are expressed in both thymus and peripheral CD8+ T-cells. Expression of isoform 1 is higher in thymus CD8+ T-cells than in peripheral CD8+ T-cells. Expression of isoform 6 is higher in peripheral CD8+ T-cells than in thymus CD8+ T-cells.

It localises to the cell membrane. The protein localises to the secreted. Integral membrane glycoprotein that plays an essential role in the immune response and serves multiple functions in responses against both external and internal offenses. In T-cells, functions primarily as a coreceptor for MHC class I molecule:peptide complex. The antigens presented by class I peptides are derived from cytosolic proteins while class II derived from extracellular proteins. Interacts simultaneously with the T-cell receptor (TCR) and the MHC class I proteins presented by antigen presenting cells (APCs). In turn, recruits the Src kinase LCK to the vicinity of the TCR-CD3 complex. A palmitoylation site in the cytoplasmic tail of CD8B chain contributes to partitioning of CD8 into the plasma membrane lipid rafts where signaling proteins are enriched. Once LCK recruited, it initiates different intracellular signaling pathways by phosphorylating various substrates ultimately leading to lymphokine production, motility, adhesion and activation of cytotoxic T-lymphocytes (CTLs). Additionally, plays a critical role in thymic selection of CD8+ T-cells. In Homo sapiens (Human), this protein is T-cell surface glycoprotein CD8 beta chain (CD8B).